The primary structure comprises 399 residues: Methylthioribose kinase (399 aa).

Residues Asn-40, Lys-57, and 111-113 (EDL) each bind ATP. A substrate-binding site is contributed by Asp-229. 246 to 248 (DAE) is an ATP binding site. A substrate-binding site is contributed by Arg-344.

The protein belongs to the methylthioribose kinase family. As to quaternary structure, homodimer.

The catalysed reaction is 5-(methylsulfanyl)-D-ribose + ATP = 5-(methylsulfanyl)-alpha-D-ribose 1-phosphate + ADP + H(+). It functions in the pathway amino-acid biosynthesis; L-methionine biosynthesis via salvage pathway; S-methyl-5-thio-alpha-D-ribose 1-phosphate from S-methyl-5'-thioadenosine (hydrolase route): step 2/2. In terms of biological role, catalyzes the phosphorylation of methylthioribose into methylthioribose-1-phosphate. In Erwinia tasmaniensis (strain DSM 17950 / CFBP 7177 / CIP 109463 / NCPPB 4357 / Et1/99), this protein is Methylthioribose kinase.